Reading from the N-terminus, the 109-residue chain is Cell division protein ZapA (109 aa).

Residues 21–97 (PEQRDALSQA…QTIEQALLDQ (77 aa)) are a coiled coil.

The protein belongs to the ZapA family. Type 1 subfamily. Homodimer. Interacts with FtsZ.

The protein resides in the cytoplasm. In terms of biological role, activator of cell division through the inhibition of FtsZ GTPase activity, therefore promoting FtsZ assembly into bundles of protofilaments necessary for the formation of the division Z ring. It is recruited early at mid-cell but it is not essential for cell division. In Enterobacter sp. (strain 638), this protein is Cell division protein ZapA.